Here is an 804-residue protein sequence, read N- to C-terminus: Phosphatidylinositol 4-kinase beta (804 aa).

Residues 55–245 (LEKVKMIHGS…GTKLRKLILS (191 aa)) enclose the PIK helical domain. Disordered regions lie at residues 69–122 (LDKV…ARRR) and 251–309 (AHKK…EPVR). Polar residues-rich tracts occupy residues 91–103 (KLTN…TSSR) and 281–300 (DATV…SNPK). Residues 523–789 (EPWEEKVRRI…MVDGSMRSIT (267 aa)) enclose the PI3K/PI4K catalytic domain. Residues 529 to 535 (VRRIREG) form a G-loop region. The tract at residues 656-664 (QVKDRHNGN) is catalytic loop. Residues 675-699 (HIDFGFILSSSPRNLGFETSAFKLT) form an activation loop region.

Belongs to the PI3/PI4-kinase family. Type III PI4K subfamily. Mg(2+) serves as cofactor. Mn(2+) is required as a cofactor.

The protein localises to the endomembrane system. Its subcellular location is the mitochondrion outer membrane. It localises to the rough endoplasmic reticulum membrane. The catalysed reaction is a 1,2-diacyl-sn-glycero-3-phospho-(1D-myo-inositol) + ATP = a 1,2-diacyl-sn-glycero-3-phospho-(1D-myo-inositol 4-phosphate) + ADP + H(+). Its function is as follows. Phosphorylates phosphatidylinositol (PI) in the first committed step in the production of the second messenger inositol-1,4,5,-trisphosphate (PIP). May play an important role in the inner ear development. In Xenopus laevis (African clawed frog), this protein is Phosphatidylinositol 4-kinase beta (pi4kb).